Consider the following 485-residue polypeptide: Glutamate--tRNA ligase (485 aa).

A 'HIGH' region motif is present at residues 11–21; it reads PSPTGHLHIGN. A 'KMSKS' region motif is present at residues 252 to 256; sequence KLSKR. Residue K255 participates in ATP binding.

The protein belongs to the class-I aminoacyl-tRNA synthetase family. Glutamate--tRNA ligase type 1 subfamily. Monomer.

The protein localises to the cytoplasm. It catalyses the reaction tRNA(Glu) + L-glutamate + ATP = L-glutamyl-tRNA(Glu) + AMP + diphosphate. Functionally, catalyzes the attachment of glutamate to tRNA(Glu) in a two-step reaction: glutamate is first activated by ATP to form Glu-AMP and then transferred to the acceptor end of tRNA(Glu). The chain is Glutamate--tRNA ligase from Bacillus licheniformis (strain ATCC 14580 / DSM 13 / JCM 2505 / CCUG 7422 / NBRC 12200 / NCIMB 9375 / NCTC 10341 / NRRL NRS-1264 / Gibson 46).